The chain runs to 205 residues: High frequency lysogenization protein HflD homolog (205 aa).

Belongs to the HflD family.

It is found in the cytoplasm. The protein localises to the cell inner membrane. The protein is High frequency lysogenization protein HflD homolog of Haemophilus influenzae (strain 86-028NP).